Here is a 46-residue protein sequence, read N- to C-terminus: uncharacterized protein (46 aa).

It is found in the plastid. It localises to the chloroplast. This is an uncharacterized protein from Trieres chinensis (Marine centric diatom).